The following is a 574-amino-acid chain: Proline--tRNA ligase (574 aa).

The protein belongs to the class-II aminoacyl-tRNA synthetase family. ProS type 1 subfamily. In terms of assembly, homodimer.

It is found in the cytoplasm. It catalyses the reaction tRNA(Pro) + L-proline + ATP = L-prolyl-tRNA(Pro) + AMP + diphosphate. Its function is as follows. Catalyzes the attachment of proline to tRNA(Pro) in a two-step reaction: proline is first activated by ATP to form Pro-AMP and then transferred to the acceptor end of tRNA(Pro). As ProRS can inadvertently accommodate and process non-cognate amino acids such as alanine and cysteine, to avoid such errors it has two additional distinct editing activities against alanine. One activity is designated as 'pretransfer' editing and involves the tRNA(Pro)-independent hydrolysis of activated Ala-AMP. The other activity is designated 'posttransfer' editing and involves deacylation of mischarged Ala-tRNA(Pro). The misacylated Cys-tRNA(Pro) is not edited by ProRS. This chain is Proline--tRNA ligase, found in Marinomonas sp. (strain MWYL1).